A 132-amino-acid polypeptide reads, in one-letter code: Translation initiation factor 5A (132 aa).

K36 bears the Hypusine mark.

It belongs to the eIF-5A family.

The protein resides in the cytoplasm. Its function is as follows. Functions by promoting the formation of the first peptide bond. The protein is Translation initiation factor 5A (eIF5A) of Desulfurococcus amylolyticus (strain DSM 18924 / JCM 16383 / VKM B-2413 / 1221n) (Desulfurococcus kamchatkensis).